We begin with the raw amino-acid sequence, 170 residues long: Urease accessory protein UreE (170 aa).

This sequence belongs to the UreE family.

The protein resides in the cytoplasm. Functionally, involved in urease metallocenter assembly. Binds nickel. Probably functions as a nickel donor during metallocenter assembly. The chain is Urease accessory protein UreE from Helicobacter pylori (strain J99 / ATCC 700824) (Campylobacter pylori J99).